Reading from the N-terminus, the 40-residue chain is GGCINHGQPCDGDKNDCQCCRDNGYCNCDGIFGLKWNCKC.

4 cysteine pairs are disulfide-bonded: Cys3–Cys20, Cys10–Cys26, Cys19–Cys40, and Cys28–Cys38.

Expressed by the venom gland.

The protein localises to the secreted. Functionally, not toxic to mice by intracerebroventricular injection. The chain is U4-ctenitoxin-Co1c from Ctenus ornatus (Brazilian spider).